The primary structure comprises 208 residues: Putative adhesin P1-like protein MPN_468 (208 aa).

Disordered regions lie at residues 29 to 49 (TNGS…VAPT) and 97 to 172 (DSKT…NLTP). Residues 100 to 132 (TQNNTTTNENHTKFASATGSGQQQGSTTTTSAG) show a composition bias toward low complexity. Polar residues predominate over residues 145–158 (SGNSISVQEATSGD). Low complexity predominate over residues 159 to 172 (NLTNYTNLPPNLTP).

It belongs to the adhesin P1 family.

In Mycoplasma pneumoniae (strain ATCC 29342 / M129 / Subtype 1) (Mycoplasmoides pneumoniae), this protein is Putative adhesin P1-like protein MPN_468.